Consider the following 336-residue polypeptide: Ornithine carbamoyltransferase, catabolic (336 aa).

Carbamoyl phosphate is bound by residues 57-60 (STRT), Gln-84, Arg-108, and 135-138 (HPTQ). Residues Asn-168, Asp-232, and 236–237 (SM) contribute to the L-ornithine site. Residues 274–275 (CL) and Arg-321 each bind carbamoyl phosphate.

The protein belongs to the aspartate/ornithine carbamoyltransferase superfamily. OTCase family.

The protein localises to the cytoplasm. It catalyses the reaction carbamoyl phosphate + L-ornithine = L-citrulline + phosphate + H(+). The protein operates within amino-acid degradation; L-arginine degradation via ADI pathway; carbamoyl phosphate from L-arginine: step 2/2. Reversibly catalyzes the transfer of the carbamoyl group from carbamoyl phosphate (CP) to the N(epsilon) atom of ornithine (ORN) to produce L-citrulline. This is Ornithine carbamoyltransferase, catabolic from Burkholderia mallei (strain ATCC 23344).